The following is a 453-amino-acid chain: Adenosylmethionine-8-amino-7-oxononanoate aminotransferase (453 aa).

Pyridoxal 5'-phosphate is bound at residue 118-119; that stretch reads GA. Tyrosine 151 contributes to the substrate binding site. A pyridoxal 5'-phosphate-binding site is contributed by aspartate 257. Lysine 286, glycine 321, and arginine 416 together coordinate substrate. Lysine 286 is modified (N6-(pyridoxal phosphate)lysine).

This sequence belongs to the class-III pyridoxal-phosphate-dependent aminotransferase family. BioA subfamily. In terms of assembly, homodimer. The cofactor is pyridoxal 5'-phosphate.

It localises to the cytoplasm. It catalyses the reaction (8S)-8-amino-7-oxononanoate + S-adenosyl-L-methionine = S-adenosyl-4-methylsulfanyl-2-oxobutanoate + (7R,8S)-7,8-diammoniononanoate. Its pathway is cofactor biosynthesis; biotin biosynthesis; 7,8-diaminononanoate from 8-amino-7-oxononanoate (SAM route): step 1/1. In terms of biological role, catalyzes the transfer of the alpha-amino group from S-adenosyl-L-methionine (SAM) to 7-keto-8-aminopelargonic acid (KAPA) to form 7,8-diaminopelargonic acid (DAPA). It is the only aminotransferase known to utilize SAM as an amino donor. The protein is Adenosylmethionine-8-amino-7-oxononanoate aminotransferase of Aquifex aeolicus (strain VF5).